The sequence spans 1552 residues: Nonribosomal peptide synthetase acrB (1552 aa).

The tract at residues 129–564 (ASFAQERIWF…PVANLAIFDE (436 aa)) is condensation. The adenylation stretch occupies residues 594 to 999 (RHCKAHPRDV…RMEGSAQVKI (406 aa)). The Carrier domain occupies 1110–1186 (APLGVEEEVM…AMARLLQPQE (77 aa)). At S1146 the chain carries O-(pantetheine 4'-phosphoryl)serine. Residues 1226–1464 (LTGATGFLGR…DFVGVDAVAS (239 aa)) form a thiolester reductase (R) domain region.

It belongs to the NRP synthetase family.

It participates in secondary metabolite biosynthesis. Functionally, nonribosomal peptide synthetase; part of the cluster that mediates the biosynthesis of acurin A, a highly reduced polyketide coupled to a serine via a peptide bond. The activities of the highly reducing polyketide synthase acrA and the nonribosomal peptide synthetase acrB are collectively responsible for the synthesis of the acurin A core structure with a heptaketide backbone produced by acrA covalently fused to a L-serine by acrB. After the formation of the PK-NRP hybrid product, it is detached from acrB by reductive release to set up the formation of the lactam ring by aldol condensation. The hydrolyase acrC then catalyzes water loss to generate a double bond in the ring. This double bond is probably reduced, which is followed by three oxidations at C-22 to generate the carboxylic acid moiety, involving probably the FAD-binding monooxygenase acrE and the cytochrome P450 monooxygenases acrD and acrF. Finally, a last methylation step performed by the O-methyltransferase acrG leads to the production of acurin A. This chain is Nonribosomal peptide synthetase acrB, found in Aspergillus aculeatus (strain ATCC 16872 / CBS 172.66 / WB 5094).